Consider the following 751-residue polypeptide: Oxysterol-binding protein-related protein 11 (751 aa).

Met-1 carries the N-acetylmethionine modification. Residues 1-57 form a disordered region; it reads MQGGEPASVMKVSESEGKLEGLATAVTPNKNSGNSSCGGAISSSSSNSSRGGSAKGW. Ser-15 is modified (phosphoserine). At Thr-27 the chain carries Phosphothreonine. Positions 31 to 52 are enriched in low complexity; sequence NSGNSSCGGAISSSSSNSSRGG. One can recognise a PH domain in the interval 63–160; that stretch reads MESVNGYLMK…WVSRLQICTQ (98 aa). Residues Ser-177, Ser-179, Ser-182, Ser-186, Ser-189, and Ser-194 each carry the phosphoserine modification. Disordered stretches follow at residues 475-497 and 694-716; these read SGVS…EEAP and EIDK…ERLR.

It belongs to the OSBP family. In terms of assembly, heterodimer with OSBPL9.

Its subcellular location is the late endosome membrane. It localises to the golgi apparatus. The protein localises to the trans-Golgi network membrane. The catalysed reaction is a 1,2-diacyl-sn-glycero-3-phospho-(1D-myo-inositol 4-phosphate)(out) + a 1,2-diacyl-sn-glycero-3-phospho-L-serine(in) = a 1,2-diacyl-sn-glycero-3-phospho-(1D-myo-inositol 4-phosphate)(in) + a 1,2-diacyl-sn-glycero-3-phospho-L-serine(out). Plays a role in regulating ADIPOQ and FABP4 levels in differentiating adipocytes and is also involved in regulation of adipocyte triglyceride storage. Weakly binds 25-hydroxycholesterol. Interacts with OSBPL9 to function as lipid transfer proteins. Together they form a heterodimer that localizes at the ER-trans-Golgi membrane contact sites, and exchanges phosphatidylserine (1,2-diacyl-sn-glycero-3-phospho-L-serine, PS) for phosphatidylinositol-4-phosphate (1,2-diacyl-sn-glycero-3-phospho-(1D-myo-inositol 4-phosphate), PI(4)P) between the two organelles, a step that is critical for sphingomyelin synthesis in the Golgi complex. This is Oxysterol-binding protein-related protein 11 (Osbpl11) from Mus musculus (Mouse).